The following is a 174-amino-acid chain: Gamma-crystallin D (174 aa).

Beta/gamma crystallin 'Greek key' domains follow at residues 2–40 (GKITFYEDRGFQGRHYECSTDHSNLQPYFSRCNSVRVDS) and 41–83 (GCWM…RLIP). Residues 84-87 (HAGS) form a connecting peptide region. 2 Beta/gamma crystallin 'Greek key' domains span residues 88-128 (HRIR…NVLE) and 129-171 (GCWV…RRVM).

Belongs to the beta/gamma-crystallin family. As to expression, detected in the superior olivary complex and fibers of the ventral aoustic stria of the auditory hindbrain.

Crystallins are the dominant structural components of the vertebrate eye lens. The polypeptide is Gamma-crystallin D (Crygd) (Rattus norvegicus (Rat)).